We begin with the raw amino-acid sequence, 227 residues long: Cytochrome c oxidase subunit 2 (227 aa).

The Mitochondrial intermembrane segment spans residues 1–14 (MAYPVQLGFQDAAS). Residues 15–45 (PIMEELLYFHDHTLMIVFLISSLVLYIISLM) traverse the membrane as a helical segment. Residues 46 to 59 (LTTKLMHTSTMDAQ) lie on the Mitochondrial matrix side of the membrane. Residues 60 to 87 (EVETVWTILPAIILILIALPSLRILYMM) form a helical membrane-spanning segment. The Mitochondrial intermembrane portion of the chain corresponds to 88–227 (DEITTPSLTL…HFEEWLLSMF (140 aa)). Cu cation is bound by residues His-161, Cys-196, Glu-198, Cys-200, His-204, and Met-207. Glu-198 serves as a coordination point for Mg(2+).

This sequence belongs to the cytochrome c oxidase subunit 2 family. Component of the cytochrome c oxidase (complex IV, CIV), a multisubunit enzyme composed of 14 subunits. The complex is composed of a catalytic core of 3 subunits MT-CO1, MT-CO2 and MT-CO3, encoded in the mitochondrial DNA, and 11 supernumerary subunits COX4I, COX5A, COX5B, COX6A, COX6B, COX6C, COX7A, COX7B, COX7C, COX8 and NDUFA4, which are encoded in the nuclear genome. The complex exists as a monomer or a dimer and forms supercomplexes (SCs) in the inner mitochondrial membrane with NADH-ubiquinone oxidoreductase (complex I, CI) and ubiquinol-cytochrome c oxidoreductase (cytochrome b-c1 complex, complex III, CIII), resulting in different assemblies (supercomplex SCI(1)III(2)IV(1) and megacomplex MCI(2)III(2)IV(2)). Found in a complex with TMEM177, COA6, COX18, COX20, SCO1 and SCO2. Interacts with TMEM177 in a COX20-dependent manner. Interacts with COX20. Interacts with COX16. Cu cation serves as cofactor.

The protein localises to the mitochondrion inner membrane. The enzyme catalyses 4 Fe(II)-[cytochrome c] + O2 + 8 H(+)(in) = 4 Fe(III)-[cytochrome c] + 2 H2O + 4 H(+)(out). Functionally, component of the cytochrome c oxidase, the last enzyme in the mitochondrial electron transport chain which drives oxidative phosphorylation. The respiratory chain contains 3 multisubunit complexes succinate dehydrogenase (complex II, CII), ubiquinol-cytochrome c oxidoreductase (cytochrome b-c1 complex, complex III, CIII) and cytochrome c oxidase (complex IV, CIV), that cooperate to transfer electrons derived from NADH and succinate to molecular oxygen, creating an electrochemical gradient over the inner membrane that drives transmembrane transport and the ATP synthase. Cytochrome c oxidase is the component of the respiratory chain that catalyzes the reduction of oxygen to water. Electrons originating from reduced cytochrome c in the intermembrane space (IMS) are transferred via the dinuclear copper A center (CU(A)) of subunit 2 and heme A of subunit 1 to the active site in subunit 1, a binuclear center (BNC) formed by heme A3 and copper B (CU(B)). The BNC reduces molecular oxygen to 2 water molecules using 4 electrons from cytochrome c in the IMS and 4 protons from the mitochondrial matrix. This is Cytochrome c oxidase subunit 2 (MT-CO2) from Propithecus tattersalli (Golden-crowned Sifaka).